The following is a 464-amino-acid chain: Serine/threonine-protein kinase 38-like (464 aa).

Alanine 2 carries the post-translational modification N-acetylalanine. The S100B binding stretch occupies residues 64 to 89 (KLRRSQHARKETEFLRLKRTRLGLDD). Threonine 75 is modified (phosphothreonine). The Protein kinase domain maps to 90 to 383 (FESLKVIGRG…VEEIKGHPFF (294 aa)). ATP is bound by residues 96–104 (IGRGAFGEV) and lysine 119. Aspartate 213 acts as the Proton acceptor in catalysis. The residue at position 282 (serine 282) is a Phosphoserine; by autocatalysis. In terms of domain architecture, AGC-kinase C-terminal spans 384–453 (EGVDWGHIRE…KRFEGLTQRG (70 aa)). Position 442 is a phosphothreonine; by STK24/MST3 (threonine 442).

It belongs to the protein kinase superfamily. AGC Ser/Thr protein kinase family. As to quaternary structure, homodimeric S100B binds two molecules of STK38L. Interacts with MOB1 and MOB2. Interacts with MICAL1; leading to inhibit the protein kinase activity by antagonizing activation by MST1/STK4. Mg(2+) serves as cofactor. In terms of tissue distribution, highly expressed in the large and small intestine, stomach and testis. High levels also present in the brain, in particular the neurocortex, basal forebrain, hippocampus, the amygdala, cerebellum and brainstem.

It is found in the cytoplasm. Its subcellular location is the cytoskeleton. The protein localises to the membrane. The enzyme catalyses L-seryl-[protein] + ATP = O-phospho-L-seryl-[protein] + ADP + H(+). The catalysed reaction is L-threonyl-[protein] + ATP = O-phospho-L-threonyl-[protein] + ADP + H(+). Activated by binding of S100B which releases autoinhibitory N-lobe interactions, enabling ATP to bind and the autophosphorylation of Ser-282. Thr-442 then undergoes calcium-dependent phosphorylation by STK24/MST3. Interactions between phosphorylated Thr-442 and the N-lobe promote additional structural changes that complete the activation of the kinase. Autoinhibition is also released by the binding of MOB1/MOBKL1A and MOB2 to the N-terminal of STK38L. In terms of biological role, involved in the regulation of structural processes in differentiating and mature neuronal cells. The protein is Serine/threonine-protein kinase 38-like of Mus musculus (Mouse).